Consider the following 211-residue polypeptide: Large ribosomal subunit protein uL3 (211 aa).

Gln-150 is subject to N5-methylglutamine.

Belongs to the universal ribosomal protein uL3 family. Part of the 50S ribosomal subunit. Forms a cluster with proteins L14 and L19. In terms of processing, methylated by PrmB.

One of the primary rRNA binding proteins, it binds directly near the 3'-end of the 23S rRNA, where it nucleates assembly of the 50S subunit. This is Large ribosomal subunit protein uL3 from Pseudomonas fluorescens (strain SBW25).